The following is a 262-amino-acid chain: Hydroxyethylthiazole kinase (262 aa).

A substrate-binding site is contributed by Met41. Residues Arg117 and Ser163 each coordinate ATP. Residue Gly190 coordinates substrate.

Belongs to the Thz kinase family. Requires Mg(2+) as cofactor.

It carries out the reaction 5-(2-hydroxyethyl)-4-methylthiazole + ATP = 4-methyl-5-(2-phosphooxyethyl)-thiazole + ADP + H(+). It participates in cofactor biosynthesis; thiamine diphosphate biosynthesis; 4-methyl-5-(2-phosphoethyl)-thiazole from 5-(2-hydroxyethyl)-4-methylthiazole: step 1/1. In terms of biological role, catalyzes the phosphorylation of the hydroxyl group of 4-methyl-5-beta-hydroxyethylthiazole (THZ). The chain is Hydroxyethylthiazole kinase from Levilactobacillus brevis (strain ATCC 367 / BCRC 12310 / CIP 105137 / JCM 1170 / LMG 11437 / NCIMB 947 / NCTC 947) (Lactobacillus brevis).